Here is a 1157-residue protein sequence, read N- to C-terminus: MAVPARTCGASWPGPVRTARPWPGRGPRPCPDPRGPASGPARPLLLLLPPLLLLPLLTAPGASAYSFPQQHTMQHWARRLEQEIDGVMRIFGGVQQLREIYKDNRNLFDVQENEPQKLVEKVAGDIESLLDRKVQALKRLADAAENFQKAHRWQDNIKEEDIMYYDAKADAELDDPESEDMERGSKTSALRLDFIEEPNFKNKVNYSYTAVQIPTDIYKGSTVILNELNWTEALENVFIENRRQDPTLLWQVFGSATGVTRYYPATPWRAPKKIDLYDVRRRPWYIQGASSPKDMVIIVDVSGSVSGLTLKLMKTSVCEMLDTLSDDDYVNVASFNEKAQPVSCFTHLVQANVRNKKVFKEAVQGMVAKGTTGYKAGFEYAFDQLQNSNITRANCNKMIMMFTDGGEDRVQDVFEKYNWPNRTVRVFTFSVGQHNYDVTPLQWMACTNKGYYFEIPSIGAIRINTQEYLDVLGRPMVLAGKDAKQVQWTNVYEDALGLGLVVTGTLPVFNLTQDGPGDKKNQLILGVMGIDVALNDIKRLTPNYTLGANGYVFAIDLNGYVLLHPNLKPQITNFREPVTLDFLDAELEDENKEEIRRSMIDGDKGHKQIRTLVKSLDERYIDEVIRNYTWVPIRSTNYSLGLVLPPYSTYYLQANLSDQILQVKLPISKLKDFEFLLPSSFESEGHVFIAPREYCKDLNASDNNTEFLKNFIELMEKVTPDSKQCNNFLLHNLILDTGITQQLVERVWRDQDLNTYSLLAVFAATDGGITRVFPNKAAEDWTENPEPFNASFYRRSLDNRGYIFKPPHQDSLLRPLELENDTVGVLVSTAVELSLGRRTLRPAVVGVKLDLEAWAEKFKVLASNRTHQDQPQKQCGPSSHCEMDCEVNNEDLLCVLIDDGGFLVLSNQNHQWDQVGRFFSEVDANLMLALYNNSFYTRKESYDYQAACAPQPPGNLGAAPRGVFVPTIADFLNLAWWTSAAAWSLFQQLLYGLIYHSWFQADPAEAEGSPETRESSCVMKQTQYYFGSVNASYNAIIDCGNCSRLFHAQRLTNTNLLFVVAEKPLCSQCEVGRLLQKETHCPADGPEQCELVQRPRYRTGPHICFDYNATEDTSDCGRGASFPPSLGVLVSLQLLLLLGLPPRPQPQIHSFTPSRRL.

The signal sequence occupies residues 1-18; that stretch reads MAVPARTCGASWPGPVRT. The disordered stretch occupies residues 1 to 37; sequence MAVPARTCGASWPGPVRTARPWPGRGPRPCPDPRGPA. Over 19 to 1119 the chain is Extracellular; it reads ARPWPGRGPR…TEDTSDCGRG (1101 aa). Positions 24 to 34 are enriched in pro residues; that stretch reads GRGPRPCPDPR. N205 is a glycosylation site (N-linked (GlcNAc...) asparagine). The region spanning 294–472 is the VWFA domain; it reads DMVIIVDVSG…INTQEYLDVL (179 aa). D300, S302, and S304 together coordinate a divalent metal cation. Residues 300–304 carry the MIDAS-like motif motif; it reads DVSGS. N389, N421, N510, N543, N627, and N864 each carry an N-linked (GlcNAc...) asparagine glycan. Residues C446 and C1104 are joined by a disulfide bond. Residues 488 to 577 enclose the Cache domain; sequence WTNVYEDALG…KPQITNFREP (90 aa). A helical transmembrane segment spans residues 1120–1140; that stretch reads ASFPPSLGVLVSLQLLLLLGL. Over 1141–1157 the chain is Cytoplasmic; that stretch reads PPRPQPQIHSFTPSRRL.

Belongs to the calcium channel subunit alpha-2/delta family. Dimer formed of alpha-2-2 and delta-2 chains; disulfide-linked. Voltage-dependent calcium channels are multisubunit complexes, consisting of alpha-1 (CACNA1), alpha-2 (CACNA2D), beta (CACNB) and delta (CACNA2D) subunits in a 1:1:1:1 ratio. N-glycosylated. In terms of processing, may be proteolytically processed into subunits alpha-2-2 and delta-2 that are disulfide-linked. It is however unclear whether such cleavage really takes place in vivo and has a functional role. As to expression, in heart, it is highly expressed in atrium and at lower level in ventricle.

The protein resides in the membrane. Functionally, the alpha-2/delta subunit of voltage-dependent calcium channels regulates calcium current density and activation/inactivation kinetics of the calcium channel. Acts as a regulatory subunit for P/Q-type calcium channel (CACNA1A), N-type (CACNA1B), L-type (CACNA1C OR CACNA1D) and possibly T-type (CACNA1G). Overexpression induces apoptosis. The polypeptide is Voltage-dependent calcium channel subunit alpha-2/delta-2 (Cacna2d2) (Rattus norvegicus (Rat)).